A 513-amino-acid chain; its full sequence is Protein indeterminate-domain 11 (513 aa).

Positions 1-84 (MMNKDMLLHQ…QPGNPDPESE (84 aa)) are disordered. Positions 10–45 (QHQQPQQDENMSNLTSASGDQASVSSGNITEASGSN) are enriched in polar residues. Residues 51 to 60 (QQQQEQQQQQ) show a composition bias toward low complexity. Serine 89 bears the Phosphoserine mark. 2 consecutive C2H2-type zinc fingers follow at residues 99–121 (FVCE…RRGH) and 141–171 (YVCP…CRKH). Positions 163 to 170 (IKKHFCRK) match the Nuclear localization signal motif. A C2H2-type 2; degenerate zinc finger spans residues 176–199 (WKCDKCSKKYAVQSDCKAHSKTCG). Zn(2+) contacts are provided by cysteine 178, cysteine 181, histidine 194, cysteine 198, cysteine 205, cysteine 207, histidine 220, and cysteine 224. The CCHC-type 2; atypical zinc-finger motif lies at 203–226 (YRCDCGTLFSRRDSFITHRAFCEA). Residues 213–225 (RRDSFITHRAFCE) form an SHR-binding region. Disordered regions lie at residues 255–280 (ASHP…SHNH) and 334–358 (PQPH…SLFS). A compositionally biased stretch (low complexity) spans 264 to 280 (TQPTINVSSSSSSSHNH).

The protein localises to the nucleus. Probable transcription factor. The protein is Protein indeterminate-domain 11 of Arabidopsis thaliana (Mouse-ear cress).